Here is a 684-residue protein sequence, read N- to C-terminus: MKRVKSESFRGVYSSRRFKLSHFLLAIAGFYLVFLAFKFPHFIEMVAMLSGDTGLDGALSDTSLDVSLSGSLRNDMLNRKLEDEDHQSGPSTTQKVSPEEKINGSKQIQPLLFRYGRISGEVMRRRNRTIHMSPFERMADEAWILGSKAWEDVDKFEVDKINESASIFEGKVESCPSQISMNGDDLNKANRIMLLPCGLAAGSSITILGTPQYAHKESVPQRSRLTRSYGMVLVSQFMVELQGLKTGDGEYPPKILHLNPRIKGDWNHRPVIEHNTCYRMQWGVAQRCDGTPSKKDADVLVDGFRRCEKWTQNDIIDMVDSKESKTTSWFKRFIGREQKPEVTWSFPFAEGKVFVLTLRAGIDGFHINVGGRHVSSFPYRPGFTIEDATGLAVTGDVDIHSIHATSLSTSHPSFSPQKAIEFSSEWKAPPLPGTPFRLFMGVLSATNHFSERMAVRKTWMQHPSIKSSDVVARFFVALNPRKEVNAMLKKEAEYFGDIVILPFMDRYELVVLKTIAICEFGVQNVTAPYIMKCDDDTFIRVESILKQIDGVSPEKSLYMGNLNLRHRPLRTGKWTVTWEEWPEAVYPPYANGPGYIISSNIAKYIVSQNSRHKLRLFKMEDVSMGLWVEQFNASMQPVEYSHSWKFCQYGCTLNYYTAHYQSPSQMMCLWDNLLKGRPQCCNFR.

Residues 1–22 (MKRVKSESFRGVYSSRRFKLSH) lie on the Cytoplasmic side of the membrane. The chain crosses the membrane as a helical; Signal-anchor for type II membrane protein span at residues 23-43 (FLLAIAGFYLVFLAFKFPHFI). The Lumenal segment spans residues 44–684 (EMVAMLSGDT…KGRPQCCNFR (641 aa)). The segment at 80-102 (KLEDEDHQSGPSTTQKVSPEEKI) is disordered. N-linked (GlcNAc...) asparagine glycans are attached at residues N103, N127, and N162. Positions 191 to 405 (RIMLLPCGLA…DVDIHSIHAT (215 aa)) constitute a Galectin domain. N524 and N632 each carry an N-linked (GlcNAc...) asparagine glycan.

The protein belongs to the glycosyltransferase 31 family. The cofactor is Mn(2+). In terms of tissue distribution, expressed in stems and at lower levels in cauline leaves and siliques.

The protein resides in the golgi apparatus membrane. The protein operates within protein modification; protein glycosylation. Possesses hydroxyproline O-galactosyltransferase activity. Transfers galactose from UDP-galactose to hydroxyproline residues in the arabinogalactan proteins (AGPs). Is specific for AGPs containing non-contiguous peptidyl hydroxyproline residues. Utilizes UDP-galactose solely as sugar donor. The addition of galactose onto the peptidyl hydroxyproline residues in AGP core proteins represents the first committed step in arabinogalactan polysaccharide addition. AGP glycans play essential roles in both vegetative and reproductive plant growth. This Arabidopsis thaliana (Mouse-ear cress) protein is Hydroxyproline O-galactosyltransferase GALT2.